A 322-amino-acid polypeptide reads, in one-letter code: N-acetyl-gamma-glutamyl-phosphate reductase (322 aa).

Residue Cys117 is part of the active site.

This sequence belongs to the NAGSA dehydrogenase family. Type 2 subfamily.

The protein resides in the cytoplasm. It carries out the reaction N-acetyl-L-glutamate 5-semialdehyde + phosphate + NADP(+) = N-acetyl-L-glutamyl 5-phosphate + NADPH + H(+). The protein operates within amino-acid biosynthesis; L-arginine biosynthesis; N(2)-acetyl-L-ornithine from L-glutamate: step 3/4. Catalyzes the NADPH-dependent reduction of N-acetyl-5-glutamyl phosphate to yield N-acetyl-L-glutamate 5-semialdehyde. The chain is N-acetyl-gamma-glutamyl-phosphate reductase from Trichormus variabilis (strain ATCC 29413 / PCC 7937) (Anabaena variabilis).